We begin with the raw amino-acid sequence, 132 residues long: Small ribosomal subunit protein uS8 (132 aa).

The protein belongs to the universal ribosomal protein uS8 family. Part of the 30S ribosomal subunit. Contacts proteins S5 and S12.

Functionally, one of the primary rRNA binding proteins, it binds directly to 16S rRNA central domain where it helps coordinate assembly of the platform of the 30S subunit. This is Small ribosomal subunit protein uS8 from Rhizobium rhizogenes (strain K84 / ATCC BAA-868) (Agrobacterium radiobacter).